A 241-amino-acid polypeptide reads, in one-letter code: Dihydropteridine reductase (241 aa).

11–35 (LVYGGRGALGSRCVQAFRARNWWVA) lines the NADP(+) pocket. An N6-succinyllysine mark is found at K70, K76, K93, and K99. Y147 serves as the catalytic Proton acceptor. S170 is subject to Phosphoserine.

This sequence belongs to the short-chain dehydrogenases/reductases (SDR) family. In terms of assembly, homodimer.

The enzyme catalyses 5,6,7,8-tetrahydropteridine + NAD(+) = 6,7-dihydropteridine + NADH + H(+). It catalyses the reaction 5,6,7,8-tetrahydropteridine + NADP(+) = 6,7-dihydropteridine + NADPH + H(+). Catalyzes the conversion of quinonoid dihydrobiopterin into tetrahydrobiopterin. This Rattus norvegicus (Rat) protein is Dihydropteridine reductase (Qdpr).